A 107-amino-acid chain; its full sequence is Nucleoid-associated protein RC1_2305 (107 aa).

The protein belongs to the YbaB/EbfC family. Homodimer.

Its subcellular location is the cytoplasm. The protein resides in the nucleoid. Binds to DNA and alters its conformation. May be involved in regulation of gene expression, nucleoid organization and DNA protection. The chain is Nucleoid-associated protein RC1_2305 from Rhodospirillum centenum (strain ATCC 51521 / SW).